The primary structure comprises 158 residues: Transcription elongation factor GreA (158 aa).

This sequence belongs to the GreA/GreB family.

Its function is as follows. Necessary for efficient RNA polymerase transcription elongation past template-encoded arresting sites. The arresting sites in DNA have the property of trapping a certain fraction of elongating RNA polymerases that pass through, resulting in locked ternary complexes. Cleavage of the nascent transcript by cleavage factors such as GreA or GreB allows the resumption of elongation from the new 3'terminus. GreA releases sequences of 2 to 3 nucleotides. The sequence is that of Transcription elongation factor GreA from Hamiltonella defensa subsp. Acyrthosiphon pisum (strain 5AT).